Reading from the N-terminus, the 1361-residue chain is DNA-directed RNA polymerase subunit beta' (1361 aa).

Zn(2+) is bound by residues cysteine 69, cysteine 71, cysteine 84, and cysteine 87. Residues aspartate 460, aspartate 462, and aspartate 464 each coordinate Mg(2+). Residues cysteine 808, cysteine 882, cysteine 889, and cysteine 892 each contribute to the Zn(2+) site.

It belongs to the RNA polymerase beta' chain family. In terms of assembly, the RNAP catalytic core consists of 2 alpha, 1 beta, 1 beta' and 1 omega subunit. When a sigma factor is associated with the core the holoenzyme is formed, which can initiate transcription. It depends on Mg(2+) as a cofactor. Zn(2+) is required as a cofactor.

It carries out the reaction RNA(n) + a ribonucleoside 5'-triphosphate = RNA(n+1) + diphosphate. Its function is as follows. DNA-dependent RNA polymerase catalyzes the transcription of DNA into RNA using the four ribonucleoside triphosphates as substrates. This Rickettsia bellii (strain RML369-C) protein is DNA-directed RNA polymerase subunit beta'.